Here is a 615-residue protein sequence, read N- to C-terminus: Alpha-fetoprotein (615 aa).

The N-terminal stretch at 1–15 (MAVLPLSGAIRLSRG) is a signal peptide. The short motif at 14–16 (RGD) is the Cell attachment site element. 3 Albumin domains span residues 27–218 (WAKK…RRQA), 223–415 (KPIR…ELKK), and 416–609 (HIYE…VLVT). Intrachain disulfides connect C109–C121 and C120–C131. Residues N137 and N157 are each glycosylated (N-linked (GlcNAc...) asparagine). 9 cysteine pairs are disulfide-bonded: C155-C200, C199-C213, C236-C282, C281-C289, C301-C315, C314-C325, C396-C405, C428-C458, and C457-C468. A Cell attachment site motif is present at residues 283–285 (RGD). N472 carries N-linked (GlcNAc...) asparagine glycosylation. 4 disulfide bridges follow: C485-C501, C500-C511, C538-C593, and C592-C601.

This sequence belongs to the ALB/AFP/VDB family. In terms of assembly, dimeric and trimeric forms have been found in addition to the monomeric form. Post-translationally, sulfated.

The protein localises to the secreted. Binds copper, nickel, and fatty acids as well as, and bilirubin less well than, serum albumin. In Gallus gallus (Chicken), this protein is Alpha-fetoprotein (AFP).